We begin with the raw amino-acid sequence, 213 residues long: Orotate phosphoribosyltransferase (213 aa).

Lys26 contacts 5-phospho-alpha-D-ribose 1-diphosphate. Orotate is bound at residue 34–35; it reads FF. Residues 72-73, Arg99, Lys100, Lys103, His105, and 124-132 each bind 5-phospho-alpha-D-ribose 1-diphosphate; these read YK and DDVITAGTA. 2 residues coordinate orotate: Thr128 and Arg156.

Belongs to the purine/pyrimidine phosphoribosyltransferase family. PyrE subfamily. As to quaternary structure, homodimer. The cofactor is Mg(2+).

It catalyses the reaction orotidine 5'-phosphate + diphosphate = orotate + 5-phospho-alpha-D-ribose 1-diphosphate. The protein operates within pyrimidine metabolism; UMP biosynthesis via de novo pathway; UMP from orotate: step 1/2. In terms of biological role, catalyzes the transfer of a ribosyl phosphate group from 5-phosphoribose 1-diphosphate to orotate, leading to the formation of orotidine monophosphate (OMP). The sequence is that of Orotate phosphoribosyltransferase from Photobacterium profundum (strain SS9).